We begin with the raw amino-acid sequence, 161 residues long: Small ribosomal subunit protein uS9 (161 aa).

The protein belongs to the universal ribosomal protein uS9 family.

This Rickettsia canadensis (strain McKiel) protein is Small ribosomal subunit protein uS9.